The primary structure comprises 260 residues: uncharacterized protein (260 aa).

This is an uncharacterized protein from Bacillus subtilis (strain 168).